The chain runs to 262 residues: Glutamine-binding protein (262 aa).

Positions 1–26 are cleaved as a signal peptide; the sequence is MKRKTVWKIWITLALIALLSITALAG. Cys27 is lipidated: N-palmitoyl cysteine. Cys27 carries the S-diacylglycerol cysteine lipid modification.

This sequence belongs to the bacterial solute-binding protein 3 family.

Its subcellular location is the cell membrane. Involved in glutamine-transport system. Interacts with the glutamine-transport system GlnPQ. The chain is Glutamine-binding protein (glnH) from Geobacillus stearothermophilus (Bacillus stearothermophilus).